A 186-amino-acid chain; its full sequence is Elongation factor P (186 aa).

The protein belongs to the elongation factor P family.

It is found in the cytoplasm. Its pathway is protein biosynthesis; polypeptide chain elongation. Functionally, involved in peptide bond synthesis. Stimulates efficient translation and peptide-bond synthesis on native or reconstituted 70S ribosomes in vitro. Probably functions indirectly by altering the affinity of the ribosome for aminoacyl-tRNA, thus increasing their reactivity as acceptors for peptidyl transferase. In Prochlorococcus marinus (strain MIT 9312), this protein is Elongation factor P.